Consider the following 400-residue polypeptide: Argininosuccinate synthase (400 aa).

ATP-binding positions include 11-19 and Ala38; that span reads AYSGGLDTS. L-citrulline contacts are provided by Tyr89 and Ser94. Gly119 serves as a coordination point for ATP. Thr121, Asn125, and Asp126 together coordinate L-aspartate. Position 125 (Asn125) interacts with L-citrulline. L-citrulline is bound by residues Arg129, Ser179, Ser188, Glu264, and Tyr276.

It belongs to the argininosuccinate synthase family. Type 1 subfamily. As to quaternary structure, homotetramer.

The protein localises to the cytoplasm. It catalyses the reaction L-citrulline + L-aspartate + ATP = 2-(N(omega)-L-arginino)succinate + AMP + diphosphate + H(+). Its pathway is amino-acid biosynthesis; L-arginine biosynthesis; L-arginine from L-ornithine and carbamoyl phosphate: step 2/3. In Oleidesulfovibrio alaskensis (strain ATCC BAA-1058 / DSM 17464 / G20) (Desulfovibrio alaskensis), this protein is Argininosuccinate synthase.